The chain runs to 155 residues: SsrA-binding protein (155 aa).

It belongs to the SmpB family.

The protein resides in the cytoplasm. Functionally, required for rescue of stalled ribosomes mediated by trans-translation. Binds to transfer-messenger RNA (tmRNA), required for stable association of tmRNA with ribosomes. tmRNA and SmpB together mimic tRNA shape, replacing the anticodon stem-loop with SmpB. tmRNA is encoded by the ssrA gene; the 2 termini fold to resemble tRNA(Ala) and it encodes a 'tag peptide', a short internal open reading frame. During trans-translation Ala-aminoacylated tmRNA acts like a tRNA, entering the A-site of stalled ribosomes, displacing the stalled mRNA. The ribosome then switches to translate the ORF on the tmRNA; the nascent peptide is terminated with the 'tag peptide' encoded by the tmRNA and targeted for degradation. The ribosome is freed to recommence translation, which seems to be the essential function of trans-translation. This chain is SsrA-binding protein, found in Geobacillus kaustophilus (strain HTA426).